The following is a 358-amino-acid chain: DnaJ homolog subfamily C member 18 (358 aa).

The region spanning 82-146 (NYYEILGVSR…DKRLRYDEYG (65 aa)) is the J domain. The helical transmembrane segment at 228–248 (AFIQLLPVLVIVIISVITQLL) threads the bilayer.

The protein localises to the endoplasmic reticulum membrane. The polypeptide is DnaJ homolog subfamily C member 18 (DNAJC18) (Bos taurus (Bovine)).